The chain runs to 1390 residues: DNA-directed RNA polymerase subunit beta (1390 aa).

Belongs to the RNA polymerase beta chain family. The RNAP catalytic core consists of 2 alpha, 1 beta, 1 beta' and 1 omega subunit. When a sigma factor is associated with the core the holoenzyme is formed, which can initiate transcription.

The catalysed reaction is RNA(n) + a ribonucleoside 5'-triphosphate = RNA(n+1) + diphosphate. Functionally, DNA-dependent RNA polymerase catalyzes the transcription of DNA into RNA using the four ribonucleoside triphosphates as substrates. This Methylobacillus flagellatus (strain ATCC 51484 / DSM 6875 / VKM B-1610 / KT) protein is DNA-directed RNA polymerase subunit beta.